A 162-amino-acid polypeptide reads, in one-letter code: Dihydrofolate reductase (162 aa).

The DHFR domain maps to 3-161 (KITIIAACAE…VAYTFVHYLG (159 aa)). Residue 7-9 (IAA) participates in substrate binding. Residues 8–9 (AA) and 16–21 (IGAGNA) contribute to the NADP(+) site. Asp-29 provides a ligand contact to substrate. 45–48 (GRKT) serves as a coordination point for NADP(+). Arg-60 contributes to the substrate binding site. Residues 65-68 (ISRQ) and 98-103 (MGGAQI) each bind NADP(+). Thr-117 is a substrate binding site.

Belongs to the dihydrofolate reductase family.

It carries out the reaction (6S)-5,6,7,8-tetrahydrofolate + NADP(+) = 7,8-dihydrofolate + NADPH + H(+). Its pathway is cofactor biosynthesis; tetrahydrofolate biosynthesis; 5,6,7,8-tetrahydrofolate from 7,8-dihydrofolate: step 1/1. Its function is as follows. Key enzyme in folate metabolism. Catalyzes an essential reaction for de novo glycine and purine synthesis, and for DNA precursor synthesis. This is Dihydrofolate reductase (folA) from Neisseria gonorrhoeae.